A 98-amino-acid chain; its full sequence is Large ribosomal subunit protein eL21 (98 aa).

A disordered region spans residues 1-24 (MVKMSHGPRSGSRRKLTKSAEERK).

This sequence belongs to the eukaryotic ribosomal protein eL21 family.

This Thermoplasma acidophilum (strain ATCC 25905 / DSM 1728 / JCM 9062 / NBRC 15155 / AMRC-C165) protein is Large ribosomal subunit protein eL21 (rpl21e).